The primary structure comprises 224 residues: N-(5'-phosphoribosyl)anthranilate isomerase (224 aa).

The protein belongs to the TrpF family.

It catalyses the reaction N-(5-phospho-beta-D-ribosyl)anthranilate = 1-(2-carboxyphenylamino)-1-deoxy-D-ribulose 5-phosphate. The protein operates within amino-acid biosynthesis; L-tryptophan biosynthesis; L-tryptophan from chorismate: step 3/5. The sequence is that of N-(5'-phosphoribosyl)anthranilate isomerase from Allorhizobium ampelinum (strain ATCC BAA-846 / DSM 112012 / S4) (Agrobacterium vitis (strain S4)).